The chain runs to 530 residues: Laccase-2 (530 aa).

An N-terminal signal peptide occupies residues 1-23 (MLLSSAFVGSCLAILNFAAAVSA). Plastocyanin-like domains are found at residues 36 to 154 (NKVI…YDPE) and 167 to 311 (TTII…RYTN). Residue asparagine 82 is glycosylated (N-linked (GlcNAc...) asparagine). Cu cation-binding residues include histidine 88 and histidine 90. 2 cysteine pairs are disulfide-bonded: cysteine 109-cysteine 520 and cysteine 141-cysteine 228. Residue asparagine 120 is glycosylated (N-linked (GlcNAc...) asparagine). The Cu cation site is built by histidine 133 and histidine 135. N-linked (GlcNAc...) asparagine glycans are attached at residues asparagine 191, asparagine 240, asparagine 292, asparagine 311, asparagine 366, asparagine 375, asparagine 392, and asparagine 412. Residues 379 to 504 (YVNPTVPVLL…FAVVLAEAPQ (126 aa)) enclose the Plastocyanin-like 3 domain. Residues histidine 428, histidine 431, histidine 433, histidine 484, cysteine 485, histidine 486, and histidine 490 each coordinate Cu cation.

Belongs to the multicopper oxidase family. Requires Cu cation as cofactor.

It is found in the secreted. The catalysed reaction is 4 hydroquinone + O2 = 4 benzosemiquinone + 2 H2O. Its activity is regulated as follows. Inhibited by chloride ions. Inhibited by citrate. Inhibited by oxalate. Activated by acetate. In vitro, has activity towards 2,2'-azino-bis(3-ethylbenzthiazoline-6-sulfonic acid) (ABTS), 2,6-dimethoxy-phenol, and guaiacol. Although brown rot fungi preferentially degrade hemicellulose and cellulose, the enzyme may contribute to generating small amounts of lignin breakdown products required for catalytic reactions. The sequence is that of Laccase-2 from Fomitopsis schrenkii (Brown rot fungus).